The following is a 291-amino-acid chain: Glycine--tRNA ligase alpha subunit (291 aa).

It belongs to the class-II aminoacyl-tRNA synthetase family. In terms of assembly, tetramer of two alpha and two beta subunits.

It localises to the cytoplasm. The enzyme catalyses tRNA(Gly) + glycine + ATP = glycyl-tRNA(Gly) + AMP + diphosphate. The chain is Glycine--tRNA ligase alpha subunit from Microcystis aeruginosa (strain NIES-843 / IAM M-2473).